The primary structure comprises 313 residues: Olfactory receptor 1D2 (313 aa).

The Extracellular segment spans residues 1–25 (MDGGNQSEGSEFLLLGMSESPEQQR). Asparagine 5 is a glycosylation site (N-linked (GlcNAc...) asparagine). A helical membrane pass occupies residues 26–49 (ILFWMFLSMYLVTVLGNVLIILAI). Over 50-57 (SSDSRLHT) the chain is Cytoplasmic. The helical transmembrane segment at 58 to 79 (PMYFFLANLSFTDLFFVTNTIP) threads the bilayer. Topologically, residues 80 to 100 (KMLVNLQSQDKAISYAGCLTQ) are extracellular. Cysteine 97 and cysteine 189 are disulfide-bonded. Residues 101–120 (LYFLLSLVTLDNLILAVMAY) traverse the membrane as a helical segment. Topologically, residues 121-139 (DRYVAICCPLHYVTAMSPR) are cytoplasmic. A helical membrane pass occupies residues 140 to 158 (LCILLLSLCWVFSVLYGLI). The Extracellular portion of the chain corresponds to 159–196 (HTLLMTRVTFCGSRKIHYLFCEMYFLLRLACSNIQINH). Asparagine 195 carries an N-linked (GlcNAc...) asparagine glycan. A helical transmembrane segment spans residues 197–219 (TVLXATGCFIFLIPLGFMIXSYA). The Cytoplasmic segment spans residues 220–236 (RIVRAILRIPSATGKYK). Residues 237-259 (AFSTCASHLAVVSLFYGTLGMVY) form a helical membrane-spanning segment. Residues 260 to 271 (LQPLQTYSTKDS) lie on the Extracellular side of the membrane. Residues 272 to 291 (VATVMYAVVTPMMNPFIYSL) traverse the membrane as a helical segment. Topologically, residues 292–313 (RNKDIHGALGRLLQGKAFQKLT) are cytoplasmic.

Belongs to the G-protein coupled receptor 1 family.

It localises to the cell membrane. In terms of biological role, odorant receptor. The chain is Olfactory receptor 1D2 (OR1D2) from Pongo pygmaeus (Bornean orangutan).